The sequence spans 69 residues: Putative membrane protein insertion efficiency factor (69 aa).

The protein belongs to the UPF0161 family.

Its subcellular location is the cell membrane. Functionally, could be involved in insertion of integral membrane proteins into the membrane. This chain is Putative membrane protein insertion efficiency factor, found in Clostridium botulinum (strain Kyoto / Type A2).